Here is a 711-residue protein sequence, read N- to C-terminus: DNA ligase (711 aa).

The tract at residues 1-29 (MSEDAIGQQVPAAQEAAAGAEPNSAARER) is disordered. A compositionally biased stretch (low complexity) spans 12 to 25 (AAQEAAAGAEPNSA). NAD(+)-binding positions include 54 to 58 (DAAFD), 103 to 104 (SL), and E133. K135 acts as the N6-AMP-lysine intermediate in catalysis. 4 residues coordinate NAD(+): R156, E197, K313, and K337. C431, C434, C450, and C456 together coordinate Zn(2+). Positions 620 to 709 (QGPRPLEGVT…PEAARAVARV (90 aa)) constitute a BRCT domain.

Belongs to the NAD-dependent DNA ligase family. LigA subfamily. Requires Mg(2+) as cofactor. It depends on Mn(2+) as a cofactor.

It carries out the reaction NAD(+) + (deoxyribonucleotide)n-3'-hydroxyl + 5'-phospho-(deoxyribonucleotide)m = (deoxyribonucleotide)n+m + AMP + beta-nicotinamide D-nucleotide.. In terms of biological role, DNA ligase that catalyzes the formation of phosphodiester linkages between 5'-phosphoryl and 3'-hydroxyl groups in double-stranded DNA using NAD as a coenzyme and as the energy source for the reaction. It is essential for DNA replication and repair of damaged DNA. The sequence is that of DNA ligase from Salinispora tropica (strain ATCC BAA-916 / DSM 44818 / JCM 13857 / NBRC 105044 / CNB-440).